Here is a 495-residue protein sequence, read N- to C-terminus: MSLVHLLLFAGLVIAASSSSPGSRLILREISDQKDKAVELNTTNFDSVLKDTPAKYAVVEFFAHWCPACRNYKPHYEKVARLFNGPDAIHPGIVLMTRVDCAMKTNTKLCDKFSVSHYPMLFWGPPTKFVSGSWEPKKDKSEILVIDDGRTAERLLNWINKQIGSSYGLDDQKFKNEHALSNLTDYNQISQAVYDVEEATAEAFDIILAHKAIKSSETSASFIRFIQLLAAHHLSRRCRKGAAEILVNYDDLCPSGNCSYEKSGGNDTLGNFPICGKDVPRGYYMFCRGSKNDTRGFSCGLWVLMHSLSVRIEDGESHFAFTTICDFVNNFFMCDECRLHFNDMCLSVKTPFKKARDFVLWVWSTHNKVNERLLKDEASLGTGDPKFPKIIWPPKELCPLCYLSSNQKSIEWDHEHVYKFLKNYYGPKLVSLYKEKSVSRSKEETVSATEDLTVATNALVVPIGAALAIAIASCAFGALACYWRTQQKNRKPRRR.

The first 15 residues, 1–15 (MSLVHLLLFAGLVIA), serve as a signal peptide directing secretion. The region spanning 29–164 (EISDQKDKAV…LLNWINKQIG (136 aa)) is the Thioredoxin domain. A glycan (N-linked (GlcNAc...) asparagine) is linked at asparagine 41. Active-site nucleophile residues include cysteine 66 and cysteine 69. Cysteine 66 and cysteine 69 are oxidised to a cystine. N-linked (GlcNAc...) asparagine glycans are attached at residues asparagine 182, asparagine 257, asparagine 266, and asparagine 292. Cysteine 287 and cysteine 299 form a disulfide bridge. Residues 290 to 392 (SKNDTRGFSC…GDPKFPKIIW (103 aa)) enclose the ERV/ALR sulfhydryl oxidase domain. Residues arginine 295, tryptophan 302, histidine 306, glutamate 336, histidine 340, 363–370 (WSTHNKVN), lysine 389, and tryptophan 392 each bind FAD. A disulfide bridge links cysteine 334 with cysteine 337. The cysteines at positions 398 and 401 are disulfide-linked.

It depends on FAD as a cofactor.

It is found in the secreted. It carries out the reaction 2 R'C(R)SH + O2 = R'C(R)S-S(R)CR' + H2O2. Catalyzes the oxidation of sulfhydryl groups in peptide and protein thiols to disulfides with the reduction of oxygen to hydrogen peroxide. May contribute to disulfide bond formation in a variety of secreted proteins. The sequence is that of Sulfhydryl oxidase 2 (QSOX2) from Arabidopsis thaliana (Mouse-ear cress).